The following is a 291-amino-acid chain: Elongation factor Ts (291 aa).

The tract at residues 79 to 82 (TDFV) is involved in Mg(2+) ion dislocation from EF-Tu.

This sequence belongs to the EF-Ts family.

It is found in the cytoplasm. Its function is as follows. Associates with the EF-Tu.GDP complex and induces the exchange of GDP to GTP. It remains bound to the aminoacyl-tRNA.EF-Tu.GTP complex up to the GTP hydrolysis stage on the ribosome. The polypeptide is Elongation factor Ts (Stenotrophomonas maltophilia (strain K279a)).